Reading from the N-terminus, the 219-residue chain is ATP-dependent Clp protease proteolytic subunit (219 aa).

Positions 1 to 22 (MPVGVPKVPFLNPNPDPEPDSV) are disordered. Residue S116 is the Nucleophile of the active site. The active site involves H141.

This sequence belongs to the peptidase S14 family. As to quaternary structure, component of the chloroplastic Clp protease core complex.

Its subcellular location is the plastid. The protein resides in the chloroplast stroma. It carries out the reaction Hydrolysis of proteins to small peptides in the presence of ATP and magnesium. alpha-casein is the usual test substrate. In the absence of ATP, only oligopeptides shorter than five residues are hydrolyzed (such as succinyl-Leu-Tyr-|-NHMec, and Leu-Tyr-Leu-|-Tyr-Trp, in which cleavage of the -Tyr-|-Leu- and -Tyr-|-Trp bonds also occurs).. Cleaves peptides in various proteins in a process that requires ATP hydrolysis. Has a chymotrypsin-like activity. Plays a major role in the degradation of misfolded proteins. This chain is ATP-dependent Clp protease proteolytic subunit, found in Pelargonium hortorum (Common geranium).